Here is a 180-residue protein sequence, read N- to C-terminus: Large ribosomal subunit protein uL6 (180 aa).

It belongs to the universal ribosomal protein uL6 family. Part of the 50S ribosomal subunit.

This protein binds to the 23S rRNA, and is important in its secondary structure. It is located near the subunit interface in the base of the L7/L12 stalk, and near the tRNA binding site of the peptidyltransferase center. This is Large ribosomal subunit protein uL6 from Borrelia duttonii (strain Ly).